A 466-amino-acid chain; its full sequence is ATP synthase subunit beta (466 aa).

152-159 (GGAGVGKT) is an ATP binding site.

It belongs to the ATPase alpha/beta chains family. F-type ATPases have 2 components, CF(1) - the catalytic core - and CF(0) - the membrane proton channel. CF(1) has five subunits: alpha(3), beta(3), gamma(1), delta(1), epsilon(1). CF(0) has three main subunits: a(1), b(2) and c(9-12). The alpha and beta chains form an alternating ring which encloses part of the gamma chain. CF(1) is attached to CF(0) by a central stalk formed by the gamma and epsilon chains, while a peripheral stalk is formed by the delta and b chains.

Its subcellular location is the cell inner membrane. The catalysed reaction is ATP + H2O + 4 H(+)(in) = ADP + phosphate + 5 H(+)(out). In terms of biological role, produces ATP from ADP in the presence of a proton gradient across the membrane. The catalytic sites are hosted primarily by the beta subunits. This is ATP synthase subunit beta from Sulfurovum sp. (strain NBC37-1).